The following is a 344-amino-acid chain: Phosphoribosylformylglycinamidine cyclo-ligase (344 aa).

This sequence belongs to the AIR synthase family.

It is found in the cytoplasm. It catalyses the reaction 2-formamido-N(1)-(5-O-phospho-beta-D-ribosyl)acetamidine + ATP = 5-amino-1-(5-phospho-beta-D-ribosyl)imidazole + ADP + phosphate + H(+). Its pathway is purine metabolism; IMP biosynthesis via de novo pathway; 5-amino-1-(5-phospho-D-ribosyl)imidazole from N(2)-formyl-N(1)-(5-phospho-D-ribosyl)glycinamide: step 2/2. The sequence is that of Phosphoribosylformylglycinamidine cyclo-ligase from Neisseria meningitidis serogroup B (strain ATCC BAA-335 / MC58).